The primary structure comprises 82 residues: Transcription elongation factor 1 homolog (82 aa).

Zn(2+) contacts are provided by C26, C29, C50, and C53.

The protein belongs to the ELOF1 family.

Its subcellular location is the nucleus. Its function is as follows. Transcription elongation factor implicated in the maintenance of proper chromatin structure in actively transcribed regions. In Manduca sexta (Tobacco hawkmoth), this protein is Transcription elongation factor 1 homolog.